The following is a 507-amino-acid chain: Mitochondrial antiviral-signaling protein (507 aa).

Over Met1–Lys482 the chain is Cytoplasmic. Residues Lys7 and Lys10 each participate in a glycyl lysine isopeptide (Lys-Gly) (interchain with G-Cter in ubiquitin) cross-link. Residues Lys10–Arg77 enclose the CARD domain. Residues Lys10 to Arg77 form a required for interaction with NLRX1 region. The S-palmitoyl cysteine moiety is linked to residue Cys79. 3 disordered regions span residues Phe123 to Ser238, Thr250 to Pro326, and Ala350 to Gly401. The interval Pro143–Thr147 is interaction with TRAF2. Phosphoserine is present on residues Ser152, Ser157, Ser172, Ser178, Ser186, and Ser220. Positions Pro153 to Glu158 are interaction with TRAF6. Arg234 is modified (asymmetric dimethylarginine). 2 stretches are compositionally biased toward low complexity: residues Thr250–Gly266 and Val281–Ser293. The residue at position 256 (Ser256) is a Phosphoserine. The span at Asn300–Ala325 shows a compositional bias: polar residues. Lys305 participates in a covalent cross-link: Glycyl lysine isopeptide (Lys-Gly) (interchain with G-Cter in ubiquitin). An interaction with DHX33 region spans residues Pro340–Gln507. Residues Arg359–Leu368 are compositionally biased toward basic and acidic residues. The span at Val374–Leu391 shows a compositional bias: polar residues. A Phosphoserine modification is found at Ser387. Residues Leu419 to Ser422 carry the pLxIS motif motif. Ser422 bears the Phosphoserine; by TBK1 mark. Residues Pro423–Cys474 form a disordered region. The segment at Pro435 to Tyr440 is interaction with TRAF6. The helical transmembrane segment at Trp483 to Tyr500 threads the bilayer. Residues Arg501–Gln507 lie on the Mitochondrial intermembrane side of the membrane.

In terms of assembly, self-associates and polymerizes (via CARD domains) to form 400 nM long three-stranded helical filaments on mitochondria, filament nucleation requires interaction with RIGI whose CARD domains act as a template for filament assembly. Interacts with RIGI, IFIH1/MDA5, TRAF2, TRAF6 and C1QBP. May interact with FADD, RIPK1, CHUK and IKBKB. Interacts (when phosphorylated) with IRF3; following activation and phosphorylation on the pLxIS motif by TBK1, recruits IRF3. Interacts with NLRX1. Interaction with NLRX1 requires the CARD domain. Interacts with PSMA7. Interacts with TRAFD1. Interacts (via C-terminus) with PCBP2 in a complex containing MAVS/IPS1, PCBP2 and ITCH. Interacts with CYLD. Interacts with SRC. Interacts with DHX58/LGP2 and IKBKE. Interacts with STING1. Interacts with IFIT3 (via N-terminus). Interacts with TBK1 only in the presence of IFIT3. Interacts with TTLL12; the interaction prevents MAVS binding to TBK1 and IKBKE. Interacts with MUL1. Interacts with ANKRD17. Interacts with NDFIP1. Interacts with SMURF1; the interaction is mediated by NDFIP1 and leads to MAVS ubiquitination and degradation. Interacts with UBXN1; this interaction inhibits MAVS-mediated antiviral pathway. Interacts (via C-terminus) with GPATCH3; the interaction is markedly increased upon viral infection. Directly interacts (via CARD domain) with ATG5 and ATG12, either as ATG5 and ATG12 monomers or as ATG12-ATG5 conjugates. Interacts with DHX33 (via the helicase C-terminal domain). Interacts with DDX3X (via C-terminus); this interaction may occur rapidly, but transiently after viral infection. The interaction with DDX3X potentiates MAVS-mediated IFNB induction. Conversely inhibition of this interaction prevents MAVS-mediated IFNB induction. Transiently interacts with TRAF3 early during viral infection. Interacts with CLPB. Interacts with TRAF3IP3. Interacts with TOMM70; the interaction is enhanced by virus infection. Interacts with ZNFX1. Interacts with DHX15. Interacts with N4BP3; this interaction promotes the polyubiquitination of MAVS. Interacts with TAX1BP1; this interaction induces MAVS polyubiquitination. Interacts with NLRP3; promoting NLRP3 recruitment to mitochondria and activation of the NLRP3 inflammasome. Interacts with ECSIT; this interaction bridges RIGI to the MAVS complex at the mitochondrion. Interacts with UBL7; this interaction promotes MAVS 'Lys-27'-linked ubiquitination leading to type I interferon production. Interacts (via transmembrane domain) with SMIM30/MAVI1 (via transmembrane domain); the interaction disrupts MAVS interaction with RIGI and inhibits MAVS aggregation, resulting in the repression of type I interferon signaling and innate immune responses. Following activation, phosphorylated by TBK1 at Ser-422 in the pLxIS motif. The phosphorylated pLxIS motif constitutes an IRF3-binding motif, leading to recruitment of the transcription factor IRF3 to induce type-I interferons and other cytokines. In terms of processing, ubiquitinated. Undergoes 'Lys-48'-linked polyubiquitination catalyzed by ITCH; ITCH-dependent polyubiquitination is mediated by the interaction with PCBP2 and leads to MAVS/IPS1 proteasomal degradation. Ubiquitinated by RNF125, leading to its degradation by the proteasome. Undergoes 'Lys-48'-linked ubiquitination catalyzed by SMURF1. Undergoes 'Lys-48'-linked ubiquitination catalyzed by MARCHF5 at Lys-7, leading to proteasomal degradation. Ubiquitinated via 'Lys-63'-linked ubiquitination at Lys-10 by TRIM31, promoting MAVS polymerization and formation of three-stranded helical filaments on mitochondria. Undergoes 'Lys-63'-linked ubiquitination leading to enhanced interaction between MAVS and TRAF2. Undergoes 'Lys-27'-linked ubiquitination by UBE2N and TRIM21 leading to enhanced interaction between MAVS and TBK1. Deubiquitinated by USP10 leading to attenuation of RIGI-mediated MAVS aggregation and production of type I interferon. Undergoes 'Lys-48'-linked polyubiquitination catalyzed by RNF115 leading to its degradation. Post-translationally, proteolytically cleaved by apoptotic caspases during apoptosis, leading to its inactivation. Cleavage by CASP3 during virus-induced apoptosis inactivates it, preventing cytokine overproduction. Palmitoylated by ZHDDC4. Palmitoylation promotes MAVS stabilization and activation by inhibiting 'Lys-48'- but facilitating 'Lys-63'-linked ubiquitination.

The protein localises to the mitochondrion outer membrane. Its subcellular location is the mitochondrion. It is found in the peroxisome. Adapter required for innate immune defense against viruses. Acts downstream of DHX33, RIGI and IFIH1/MDA5, which detect intracellular dsRNA produced during viral replication, to coordinate pathways leading to the activation of NF-kappa-B, IRF3 and IRF7, and to the subsequent induction of antiviral cytokines such as IFN-beta and RANTES (CCL5). Peroxisomal and mitochondrial MAVS act sequentially to create an antiviral cellular state. Upon viral infection, peroxisomal MAVS induces the rapid interferon-independent expression of defense factors that provide short-term protection, whereas mitochondrial MAVS activates an interferon-dependent signaling pathway with delayed kinetics, which amplifies and stabilizes the antiviral response. May activate the same pathways following detection of extracellular dsRNA by TLR3. May protect cells from apoptosis. Involved in NLRP3 inflammasome activation by mediating NLRP3 recruitment to mitochondria. The sequence is that of Mitochondrial antiviral-signaling protein (Mavs) from Rattus norvegicus (Rat).